The sequence spans 375 residues: Peritrophin-48 (375 aa).

An N-terminal signal peptide occupies residues 1-20 (MIIKTLLASVAIMLIATVNA). 5 Chitin-binding type-2 domains span residues 25–83 (AKYC…NCIL), 86–143 (DNPC…SDDD), 153–210 (LNIC…MCER), 224–292 (ETLC…GCNR), and 294–360 (EYTT…ACQN). C60 and C73 are disulfide-bonded. N117 is a glycosylation site (N-linked (GlcNAc...) asparagine). Intrachain disulfides connect C120-C133, C187-C200, C265-C278, and C330-C343. Residue N360 is glycosylated (N-linked (GlcNAc...) asparagine).

Glycosylated. Cardia and midgut peritrophic membrane.

May bind chitin or related oligosaccharide structures. The sequence is that of Peritrophin-48 from Lucilia cuprina (Green bottle fly).